Consider the following 383-residue polypeptide: Chorismate synthase (383 aa).

Arg-39 and Arg-45 together coordinate NADP(+). FMN is bound by residues 128–130 (RAS), Gly-291, 306–310 (KPIAT), and Arg-332.

The protein belongs to the chorismate synthase family. As to quaternary structure, homotetramer. The cofactor is FMNH2.

The enzyme catalyses 5-O-(1-carboxyvinyl)-3-phosphoshikimate = chorismate + phosphate. It participates in metabolic intermediate biosynthesis; chorismate biosynthesis; chorismate from D-erythrose 4-phosphate and phosphoenolpyruvate: step 7/7. Functionally, catalyzes the anti-1,4-elimination of the C-3 phosphate and the C-6 proR hydrogen from 5-enolpyruvylshikimate-3-phosphate (EPSP) to yield chorismate, which is the branch point compound that serves as the starting substrate for the three terminal pathways of aromatic amino acid biosynthesis. This reaction introduces a second double bond into the aromatic ring system. The polypeptide is Chorismate synthase (Thermus thermophilus (strain ATCC BAA-163 / DSM 7039 / HB27)).